Here is a 217-residue protein sequence, read N- to C-terminus: Yop proteins translocation protein R (217 aa).

4 consecutive transmembrane segments (helical) span residues 11–31 (IIVLSLLTLLPLISVMATSFV), 53–73 (MAMYGLAIILSLYVMAPVGFA), 157–177 (IGFLIYLPFIVIDLVISNILL), and 181–201 (MMMVSPMTISLPFKLLLFVLL).

It belongs to the FliP/MopC/SpaP family.

It localises to the cell membrane. Its function is as follows. Component of the yop secretion machinery. May have a role in the negative pathway regulation of yop expression controlled by calcium. In Yersinia pestis, this protein is Yop proteins translocation protein R (yscR).